Consider the following 606-residue polypeptide: Maternal effect protein oskar (606 aa).

Residues 152 to 221 form the HTH OST-type domain; that stretch reads EYPDIDSEVR…SGKRIFNLKA (70 aa). 2 positions are modified to phosphoserine: S270 and S275. Positions 425–439 are leucine-zipper; it reads LMGDDFMLYLARMEL.

Interacts with smaug (smg). As to quaternary structure, interacts with yl/yolkless. Begins to accumulate at the posterior pole of the oocyte from stage 8 onwards.

The protein localises to the endosome. In terms of biological role, organizes the germ plasm and directs localization of the posterior determinant nanos. Oskar protein is required to keep nanos (nos) RNA and staufen protein at the posterior pole. In Drosophila melanogaster (Fruit fly), this protein is Maternal effect protein oskar (osk).